The primary structure comprises 178 residues: ATP synthase subunit delta (178 aa).

It belongs to the ATPase delta chain family. As to quaternary structure, F-type ATPases have 2 components, F(1) - the catalytic core - and F(0) - the membrane proton channel. F(1) has five subunits: alpha(3), beta(3), gamma(1), delta(1), epsilon(1). F(0) has three main subunits: a(1), b(2) and c(10-14). The alpha and beta chains form an alternating ring which encloses part of the gamma chain. F(1) is attached to F(0) by a central stalk formed by the gamma and epsilon chains, while a peripheral stalk is formed by the delta and b chains.

It is found in the cell inner membrane. Functionally, f(1)F(0) ATP synthase produces ATP from ADP in the presence of a proton or sodium gradient. F-type ATPases consist of two structural domains, F(1) containing the extramembraneous catalytic core and F(0) containing the membrane proton channel, linked together by a central stalk and a peripheral stalk. During catalysis, ATP synthesis in the catalytic domain of F(1) is coupled via a rotary mechanism of the central stalk subunits to proton translocation. Its function is as follows. This protein is part of the stalk that links CF(0) to CF(1). It either transmits conformational changes from CF(0) to CF(1) or is implicated in proton conduction. The protein is ATP synthase subunit delta of Pseudomonas syringae pv. syringae (strain B728a).